The sequence spans 170 residues: Cyclic pyranopterin monophosphate synthase (170 aa).

Substrate is bound by residues Leu-89–His-91 and Met-125–Glu-126. The active site involves Asp-140.

It belongs to the MoaC family. Homohexamer; trimer of dimers.

It catalyses the reaction (8S)-3',8-cyclo-7,8-dihydroguanosine 5'-triphosphate = cyclic pyranopterin phosphate + diphosphate. It functions in the pathway cofactor biosynthesis; molybdopterin biosynthesis. In terms of biological role, catalyzes the conversion of (8S)-3',8-cyclo-7,8-dihydroguanosine 5'-triphosphate to cyclic pyranopterin monophosphate (cPMP). This chain is Cyclic pyranopterin monophosphate synthase, found in Streptomyces avermitilis (strain ATCC 31267 / DSM 46492 / JCM 5070 / NBRC 14893 / NCIMB 12804 / NRRL 8165 / MA-4680).